Here is a 54-residue protein sequence, read N- to C-terminus: Toxin AnmTx Cj 1c-1 (54 aa).

Positions 1-7 are cleaved as a signal peptide; that stretch reads MLNKRGV. 3 disulfides stabilise this stretch: Cys9/Cys50, Cys11/Cys41, and Cys33/Cys51. Glu53 carries the post-translational modification Glutamic acid 1-amide.

This sequence belongs to the sea anemone sodium channel inhibitory toxin family. Type I subfamily. Post-translationally, contains 3 disulfide bonds.

Its subcellular location is the secreted. It is found in the nematocyst. In vivo, induces marked paralysis on shrimps (C.multidentata) at 10-20 seconds after injection and a weak toxicity when injected into insect larvae (M.domestica). The sequence is that of Toxin AnmTx Cj 1c-1 from Epiactis japonica (Sea anemone).